The primary structure comprises 53 residues: UPF0391 membrane protein BamMC406_6344 (53 aa).

2 helical membrane-spanning segments follow: residues 5–25 and 30–50; these read AIIF…GIAA and IAKI…LLGV.

This sequence belongs to the UPF0391 family.

It is found in the cell membrane. The chain is UPF0391 membrane protein BamMC406_6344 from Burkholderia ambifaria (strain MC40-6).